The primary structure comprises 873 residues: Putative receptor-like protein kinase At5g39000 (873 aa).

A signal peptide spans 1–21 (MIRHALLIFSILVSTPIVGEG). At 22–445 (ATSTYEPTDV…KNKSHILPIT (424 aa)) the chain is on the extracellular side. Residues N49, N64, N138, N168, N216, N266, N300, N340, and N437 are each glycosylated (N-linked (GlcNAc...) asparagine). Residues 446–466 (LAVVGSLVVLAMFVVGVLVIM) traverse the membrane as a helical segment. At 467–873 (KKKKKSKPST…FSEINEPKAR (407 aa)) the chain is on the cytoplasmic side. The disordered stretch occupies residues 472–494 (SKPSTNSSWCPLPHGTDSTNTKP). Residues 518-803 (FEDKLIIGVG…EFALQLHETA (286 aa)) form the Protein kinase domain. ATP-binding positions include 524 to 532 (IGVGGFGSV) and K547. Catalysis depends on D646, which acts as the Proton acceptor. The disordered stretch occupies residues 813-843 (LDLMPSGEVGTTTDGEDDLFSRTTGHVGKST). Residues 833 to 843 (SRTTGHVGKST) show a composition bias toward polar residues.

This sequence belongs to the protein kinase superfamily. Ser/Thr protein kinase family.

The protein resides in the membrane. The protein is Putative receptor-like protein kinase At5g39000 of Arabidopsis thaliana (Mouse-ear cress).